Here is a 288-residue protein sequence, read N- to C-terminus: Probable aquaporin PIP1-2 (288 aa).

Residues 1-37 form a disordered region; that stretch reads MEGKEEDVRLGANKFSERQPIGTAAQGSDDKDYKEPP. 2 helical membrane-spanning segments follow: residues 57 to 77 and 92 to 114; these read IAEFMATFLFLYITVLTVMGV and IAWSFGGMIFALVYCTAGISGGH. Positions 116-118 match the NPA 1 motif; sequence NPA. A run of 3 helical transmembrane segments spans residues 135-155, 177-197, and 211-231; these read LFYMVMQCLGAICGAGVVKGF, GDGLGAEIVGTFILVYTVFSA, and ILAPLPIGFAVFLVHLATIPI. Residues 237 to 239 carry the NPA 2 motif; it reads NPA. The chain crosses the membrane as a helical span at residues 259–279; the sequence is IFWVGPFIGAALAAIYHQVVI.

The protein belongs to the MIP/aquaporin (TC 1.A.8) family. PIP (TC 1.A.8.11) subfamily. In terms of tissue distribution, expressed in roots, leaves and anthers.

Its subcellular location is the cell membrane. Aquaporins facilitate the transport of water and small neutral solutes across cell membranes. In Oryza sativa subsp. japonica (Rice), this protein is Probable aquaporin PIP1-2 (PIP1-2).